The chain runs to 117 residues: Antitoxin RelB3 (117 aa).

Its function is as follows. Antitoxin component of a type II toxin-antitoxin (TA) system. Neutralizes the effect of cognate toxin RelE3, but no other RelE or ParE toxin. This chain is Antitoxin RelB3 (relB3), found in Caulobacter vibrioides (strain ATCC 19089 / CIP 103742 / CB 15) (Caulobacter crescentus).